A 501-amino-acid chain; its full sequence is Lysine--tRNA ligase (501 aa).

E411 and E418 together coordinate Mg(2+).

It belongs to the class-II aminoacyl-tRNA synthetase family. Homodimer. Mg(2+) is required as a cofactor.

It is found in the cytoplasm. It carries out the reaction tRNA(Lys) + L-lysine + ATP = L-lysyl-tRNA(Lys) + AMP + diphosphate. The chain is Lysine--tRNA ligase from Pseudomonas aeruginosa (strain ATCC 15692 / DSM 22644 / CIP 104116 / JCM 14847 / LMG 12228 / 1C / PRS 101 / PAO1).